Consider the following 357-residue polypeptide: ATP-dependent 6-phosphofructokinase 2 (357 aa).

Residues glycine 12, 80 to 81 (KG), and 107 to 110 (GDGS) each bind ATP. Aspartate 108 is a binding site for Mg(2+). Substrate is bound by residues 131–133 (TID), arginine 168, 175–177 (MGR), glutamate 229, arginine 272, and 278–281 (HIQR). The Proton acceptor role is filled by aspartate 133.

This sequence belongs to the phosphofructokinase type A (PFKA) family. Mixed-substrate PFK group III subfamily. As to quaternary structure, homodimer or homotetramer. The cofactor is Mg(2+).

The protein localises to the cytoplasm. The enzyme catalyses beta-D-fructose 6-phosphate + ATP = beta-D-fructose 1,6-bisphosphate + ADP + H(+). Its pathway is carbohydrate degradation; glycolysis; D-glyceraldehyde 3-phosphate and glycerone phosphate from D-glucose: step 3/4. Its activity is regulated as follows. Subject to allosteric activation by ADP and other diphosphonucleosides, and inhibition by phosphoenolpyruvate. In terms of biological role, catalyzes the phosphorylation of D-fructose 6-phosphate to fructose 1,6-bisphosphate by ATP, the first committing step of glycolysis. The chain is ATP-dependent 6-phosphofructokinase 2 from Nostoc sp. (strain PCC 7120 / SAG 25.82 / UTEX 2576).